The following is a 1906-amino-acid chain: Serine protease/ABC transporter B family protein tagB (1906 aa).

An N-terminal signal peptide occupies residues 1 to 31 (MKFQFSSPSKIFLFSSVILILIFIGIKFELL). The interval 96-134 (INNNNNNNNKLNNNNNNNNNNNNNNNNNNNNNNNNNNNN) is disordered. A Peptidase S8 domain is found at 356–763 (PTVIFGTKDK…ASSTNPSNAI (408 aa)). Residues Asp387 and His432 each act as charge relay system in the active site. Asn594, Asn621, and Asn672 each carry an N-linked (GlcNAc...) asparagine glycan. The active-site Charge relay system is the Ser695. N-linked (GlcNAc...) asparagine glycans are attached at residues Asn747 and Asn823. A run of 3 helical transmembrane segments spans residues 1011 to 1031 (YIII…LMWI), 1076 to 1096 (FIIE…ASIL), and 1121 to 1141 (FIII…GSWI). The ABC transmembrane type-1 domain occupies 1080 to 1363 (LTIATACSLV…LFGVYVSYIQ (284 aa)). N-linked (GlcNAc...) asparagine glycosylation occurs at Asn1172. 3 helical membrane-spanning segments follow: residues 1210–1230 (LVFI…AVPI), 1309–1329 (WLLI…LVIQ), and 1332–1352 (FTVG…DASS). The segment at 1385-1455 (LEEEEADRLA…NNNNNIGNLD (71 aa)) is disordered. Positions 1396–1405 (LSGGGGGGGD) are enriched in gly residues. Basic and acidic residues predominate over residues 1407-1420 (GDDKKDKQNIENGK). One can recognise an ABC transporter domain in the interval 1518–1756 (IEFKNVSFRY…KGKYYRMFSE (239 aa)). Asn1522 carries an N-linked (GlcNAc...) asparagine glycan. 1553–1560 (GPSGSGKS) serves as a coordination point for ATP. Asn1658 carries N-linked (GlcNAc...) asparagine glycosylation. Residues 1757 to 1906 (DKDDTPLQNN…QMDEENDEER (150 aa)) form a disordered region. Low complexity-rich tracts occupy residues 1765-1779 (NNNN…NNNN) and 1814-1871 (EQQE…DYDQ). A compositionally biased stretch (pro residues) spans 1872–1886 (VPPPPPLPSESPSPP).

This sequence in the C-terminal section; belongs to the ABC transporter superfamily. ABCB family. Multidrug resistance exporter (TC 3.A.1.201) subfamily. The protein in the N-terminal section; belongs to the peptidase S8 family.

The protein localises to the membrane. Its function is as follows. Intercellular communication via tagB may mediate integration of cellular differentiation with morphogenesis. In Dictyostelium discoideum (Social amoeba), this protein is Serine protease/ABC transporter B family protein tagB (tagB).